The following is a 113-amino-acid chain: Dolichyl-diphosphooligosaccharide--protein glycosyltransferase subunit dad1 (113 aa).

The Cytoplasmic portion of the chain corresponds to 1 to 30 (MSVSVFSVVSRFLDEYVSSTPQRLKLLDAY). A helical transmembrane segment spans residues 31–51 (LLYILLTGALQFLYCLLVGTF). Residue proline 52 is a topological domain, lumenal. The helical transmembrane segment at 53-73 (FNSFLSGFISSVGSFILAVCL) threads the bilayer. The Cytoplasmic segment spans residues 74–92 (RIQINPQNKSDFQGISPER). A helical transmembrane segment spans residues 93 to 113 (AFADFLFANTILHLVVVNFIG).

Belongs to the DAD/OST2 family. In terms of assembly, component of the oligosaccharyltransferase (OST) complex.

It localises to the endoplasmic reticulum membrane. Its pathway is protein modification; protein glycosylation. Subunit of the oligosaccharyl transferase (OST) complex that catalyzes the initial transfer of a defined glycan (Glc(3)Man(9)GlcNAc(2) in eukaryotes) from the lipid carrier dolichol-pyrophosphate to an asparagine residue within an Asn-X-Ser/Thr consensus motif in nascent polypeptide chains, the first step in protein N-glycosylation. N-glycosylation occurs cotranslationally and the complex associates with the Sec61 complex at the channel-forming translocon complex that mediates protein translocation across the endoplasmic reticulum (ER). All subunits are required for a maximal enzyme activity. The chain is Dolichyl-diphosphooligosaccharide--protein glycosyltransferase subunit dad1 from Xenopus laevis (African clawed frog).